A 158-amino-acid polypeptide reads, in one-letter code: Transcriptional repressor NrdR (158 aa).

A zinc finger spans residues 3–34; sequence CPYCGYPDSKVIDSRPTDDNTSIRRRRECLKC. The region spanning 49 to 139 is the ATP-cone domain; sequence ILVIKKDNRR…VYRQFKDINT (91 aa).

Belongs to the NrdR family. The cofactor is Zn(2+).

Functionally, negatively regulates transcription of bacterial ribonucleotide reductase nrd genes and operons by binding to NrdR-boxes. The protein is Transcriptional repressor NrdR of Thermoanaerobacter sp. (strain X514).